A 214-amino-acid polypeptide reads, in one-letter code: ATP phosphoribosyltransferase (214 aa).

It belongs to the ATP phosphoribosyltransferase family. Short subfamily. As to quaternary structure, heteromultimer composed of HisG and HisZ subunits.

The protein localises to the cytoplasm. The enzyme catalyses 1-(5-phospho-beta-D-ribosyl)-ATP + diphosphate = 5-phospho-alpha-D-ribose 1-diphosphate + ATP. It participates in amino-acid biosynthesis; L-histidine biosynthesis; L-histidine from 5-phospho-alpha-D-ribose 1-diphosphate: step 1/9. Functionally, catalyzes the condensation of ATP and 5-phosphoribose 1-diphosphate to form N'-(5'-phosphoribosyl)-ATP (PR-ATP). Has a crucial role in the pathway because the rate of histidine biosynthesis seems to be controlled primarily by regulation of HisG enzymatic activity. The chain is ATP phosphoribosyltransferase from Streptococcus gordonii (strain Challis / ATCC 35105 / BCRC 15272 / CH1 / DL1 / V288).